The chain runs to 133 residues: Ribosome-binding factor A (133 aa).

This sequence belongs to the RbfA family. Monomer. Binds 30S ribosomal subunits, but not 50S ribosomal subunits or 70S ribosomes.

Its subcellular location is the cytoplasm. Functionally, one of several proteins that assist in the late maturation steps of the functional core of the 30S ribosomal subunit. Associates with free 30S ribosomal subunits (but not with 30S subunits that are part of 70S ribosomes or polysomes). Required for efficient processing of 16S rRNA. May interact with the 5'-terminal helix region of 16S rRNA. In Salmonella typhi, this protein is Ribosome-binding factor A.